We begin with the raw amino-acid sequence, 235 residues long: Segregation and condensation protein A (235 aa).

The protein belongs to the ScpA family. As to quaternary structure, component of a cohesin-like complex composed of ScpA, ScpB and the Smc homodimer, in which ScpA and ScpB bind to the head domain of Smc. The presence of the three proteins is required for the association of the complex with DNA.

The protein localises to the cytoplasm. In terms of biological role, participates in chromosomal partition during cell division. May act via the formation of a condensin-like complex containing Smc and ScpB that pull DNA away from mid-cell into both cell halves. This is Segregation and condensation protein A from Streptococcus equi subsp. equi (strain 4047).